A 208-amino-acid polypeptide reads, in one-letter code: Large ribosomal subunit protein uL3 (208 aa).

N5-methylglutamine is present on Q149.

It belongs to the universal ribosomal protein uL3 family. In terms of assembly, part of the 50S ribosomal subunit. Forms a cluster with proteins L14 and L19. Methylated by PrmB.

Functionally, one of the primary rRNA binding proteins, it binds directly near the 3'-end of the 23S rRNA, where it nucleates assembly of the 50S subunit. The polypeptide is Large ribosomal subunit protein uL3 (Actinobacillus succinogenes (strain ATCC 55618 / DSM 22257 / CCUG 43843 / 130Z)).